Reading from the N-terminus, the 264-residue chain is Thymidylate synthase (264 aa).

Arginine 21 is a dUMP binding site. Histidine 51 provides a ligand contact to (6R)-5,10-methylene-5,6,7,8-tetrahydrofolate. 126–127 lines the dUMP pocket; it reads RR. Cysteine 146 functions as the Nucleophile in the catalytic mechanism. DUMP contacts are provided by residues 166 to 169, asparagine 177, and 207 to 209; these read RSAD and HLY. (6R)-5,10-methylene-5,6,7,8-tetrahydrofolate is bound at residue aspartate 169. Serine 263 lines the (6R)-5,10-methylene-5,6,7,8-tetrahydrofolate pocket.

This sequence belongs to the thymidylate synthase family. Bacterial-type ThyA subfamily. As to quaternary structure, homodimer.

The protein resides in the cytoplasm. The catalysed reaction is dUMP + (6R)-5,10-methylene-5,6,7,8-tetrahydrofolate = 7,8-dihydrofolate + dTMP. Its pathway is pyrimidine metabolism; dTTP biosynthesis. Catalyzes the reductive methylation of 2'-deoxyuridine-5'-monophosphate (dUMP) to 2'-deoxythymidine-5'-monophosphate (dTMP) while utilizing 5,10-methylenetetrahydrofolate (mTHF) as the methyl donor and reductant in the reaction, yielding dihydrofolate (DHF) as a by-product. This enzymatic reaction provides an intracellular de novo source of dTMP, an essential precursor for DNA biosynthesis. The chain is Thymidylate synthase from Laribacter hongkongensis (strain HLHK9).